The primary structure comprises 1237 residues: DNA polymerase III subunit alpha (1237 aa).

It belongs to the DNA polymerase type-C family. DnaE subfamily. In terms of assembly, DNA polymerase III contains a core (composed of alpha, epsilon and theta chains) that associates with a tau subunit. This core dimerizes to form the PolIII' complex. PolIII' associates with the gamma complex (composed of gamma, delta, delta', psi and chi chains) and with the beta chain to form the complete DNA polymerase III complex.

The protein resides in the cytoplasm. The enzyme catalyses DNA(n) + a 2'-deoxyribonucleoside 5'-triphosphate = DNA(n+1) + diphosphate. In terms of biological role, DNA polymerase III is a complex, multichain enzyme responsible for most of the replicative synthesis in bacteria. This DNA polymerase also exhibits 3' to 5' exonuclease activity. The alpha chain is the DNA polymerase. The protein is DNA polymerase III subunit alpha (dnaE) of Chlamydia muridarum (strain MoPn / Nigg).